The chain runs to 422 residues: Sphingomyelin phosphodiesterase 2 (422 aa).

A Mg(2+)-binding site is contributed by Glu-49. The active-site Proton acceptor is the His-272. Helical transmembrane passes span 325 to 345 and 354 to 374; these read ALFGYVMILGLSLLVLLCVLA and AIMLWTPSVGLVLGAGAVYLF. The tract at residues 397–422 is disordered; that stretch reads TETQDLGSEPHPTHCRQQEADRAEEK. Residues 412–422 are compositionally biased toward basic and acidic residues; that stretch reads RQQEADRAEEK.

The protein belongs to the neutral sphingomyelinase family. Requires Mg(2+) as cofactor.

The protein localises to the membrane. It carries out the reaction a sphingomyelin + H2O = phosphocholine + an N-acylsphing-4-enine + H(+). The catalysed reaction is 1-O-octadecyl-sn-glycero-3-phosphocholine + H2O = 1-O-octadecyl-sn-glycerol + phosphocholine + H(+). It catalyses the reaction an N-(acyl)-sphingosylphosphocholine + H2O = an N-acyl-sphingoid base + phosphocholine + H(+). The enzyme catalyses 1-hexadecanoyl-sn-glycero-3-phosphocholine + H2O = 1-hexadecanoyl-sn-glycerol + phosphocholine + H(+). It carries out the reaction a sphingosylphosphocholine + H2O = a sphingoid base + phosphocholine + H(+). The catalysed reaction is 1-O-hexadecyl-sn-glycero-3-phosphocholine + H2O = 1-O-hexadecyl-sn-glycerol + phosphocholine + H(+). Its pathway is lipid metabolism; sphingolipid metabolism. In terms of biological role, catalyzes the hydrolysis of sphingomyelin to form ceramide and phosphocholine. Ceramide mediates numerous cellular functions, such as apoptosis and growth arrest, and is capable of regulating these 2 cellular events independently. Also hydrolyzes sphingosylphosphocholine. Hydrolyze 1-acyl-2-lyso-sn-glycero-3-phosphocholine (lyso-PC) and 1-O-alkyl-2-lyso-sn-glycero-3-phosphocholine (lyso-platelet-activating factor). The polypeptide is Sphingomyelin phosphodiesterase 2 (Smpd2) (Rattus norvegicus (Rat)).